The chain runs to 975 residues: E3 ubiquitin-protein ligase BRE1A (975 aa).

The segment at 1–37 is disordered; sequence MSGIGSKRAAGEPGTSVPPEKKTAVEDSGTTVETIKL. Lys-21 is subject to N6-acetyllysine. The residue at position 41 (Ser-41) is a Phosphoserine. Positions 43-90 form a coiled coil; the sequence is TEELDIRTLQTKNRKLAEMLDQRQAIEDELREHIEKLERRQATDDASL. A disordered region spans residues 125-155; sequence KALVVPEPEPDSDSNQERKDDRERGEGQEPA. A phosphoserine mark is found at Ser-136 and Ser-138. Positions 139 to 151 are enriched in basic and acidic residues; that stretch reads NQERKDDRERGEG. Coiled coils occupy residues 168 to 375 and 429 to 898; these read EEME…EEVV and SLHK…TTKK. N6-acetyllysine is present on residues Lys-348 and Lys-510. The tract at residues 507 to 622 is disordered; the sequence is DLNKTRLRSG…GKHDDGRKKE (116 aa). At Ser-522 the chain carries Phosphoserine. Over residues 527–540 the composition is skewed to basic and acidic residues; sequence EDPKDEPAELKQDS. The span at 543-552 shows a compositional bias: polar residues; sequence LATQSAASKA. Over residues 558-622 the composition is skewed to basic and acidic residues; sequence NEIKSKRDEE…GKHDDGRKKE (65 aa). Ser-562 bears the Phosphoserine mark. Residues 922–961 form an RING-type zinc finger; that stretch reads CPCCNMRKKDAVLTKCFHVFCFECVKTRYDTRQRKCPKCN.

It belongs to the BRE1 family. As to quaternary structure, component of the RNF20/40 complex (also known as BRE1 complex) probably composed of 2 copies of RNF20/BRE1A and 2 copies of RNF40/BRE1B. Interacts with UBE2E1/UBCH6. Interacts with p53/TP53 and WAC. Interacts with PAF1; the interaction mediates the association of the PAF1 and RNF20/40 complexes which is a prerequsite for recruitment of UBE2A/B. Interacts with PA2G4. Interacts with FBXL19.

It is found in the nucleus. It carries out the reaction S-ubiquitinyl-[E2 ubiquitin-conjugating enzyme]-L-cysteine + [acceptor protein]-L-lysine = [E2 ubiquitin-conjugating enzyme]-L-cysteine + N(6)-ubiquitinyl-[acceptor protein]-L-lysine.. The protein operates within protein modification; protein ubiquitination. Component of the RNF20/40 E3 ubiquitin-protein ligase complex that mediates monoubiquitination of 'Lys-120' of histone H2B (H2BK120ub1). H2BK120ub1 gives a specific tag for epigenetic transcriptional activation and is also prerequisite for histone H3 'Lys-4' and 'Lys-79' methylation (H3K4me and H3K79me, respectively). It thereby plays a central role in histone code and gene regulation. The RNF20/40 complex forms a H2B ubiquitin ligase complex in cooperation with the E2 enzyme UBE2A or UBE2B; reports about the cooperation with UBE2E1/UBCH are contradictory. Required for transcriptional activation of Hox genes. Recruited to the MDM2 promoter, probably by being recruited by p53/TP53, and thereby acts as a transcriptional coactivator. Mediates the polyubiquitination of PA2G4 leading to its proteasome-mediated degradation. The sequence is that of E3 ubiquitin-protein ligase BRE1A (RNF20) from Bos taurus (Bovine).